The primary structure comprises 281 residues: ATP synthase subunit a (281 aa).

6 consecutive transmembrane segments (helical) span residues 50–70 (FSFT…LLLV), 116–136 (FFPC…QGMI), 145–165 (HFLI…IVGF), 172–192 (FLSF…LVLL), 219–239 (VKIL…FYFI), and 246–266 (FIVL…AYVF).

The protein belongs to the ATPase A chain family. As to quaternary structure, F-type ATPases have 2 components, CF(1) - the catalytic core - and CF(0) - the membrane proton channel. CF(1) has five subunits: alpha(3), beta(3), gamma(1), delta(1), epsilon(1). CF(0) has three main subunits: a, b and c.

The protein resides in the mitochondrion inner membrane. In terms of biological role, mitochondrial membrane ATP synthase (F(1)F(0) ATP synthase or Complex V) produces ATP from ADP in the presence of a proton gradient across the membrane which is generated by electron transport complexes of the respiratory chain. F-type ATPases consist of two structural domains, F(1) - containing the extramembraneous catalytic core and F(0) - containing the membrane proton channel, linked together by a central stalk and a peripheral stalk. During catalysis, ATP synthesis in the catalytic domain of F(1) is coupled via a rotary mechanism of the central stalk subunits to proton translocation. Key component of the proton channel; it may play a direct role in the translocation of protons across the membrane. The sequence is that of ATP synthase subunit a (ATP6) from Oenothera berteroana (Bertero's evening primrose).